The primary structure comprises 375 residues: ATP phosphoribosyltransferase regulatory subunit (375 aa).

It belongs to the class-II aminoacyl-tRNA synthetase family. HisZ subfamily. Heteromultimer composed of HisG and HisZ subunits.

The protein localises to the cytoplasm. It functions in the pathway amino-acid biosynthesis; L-histidine biosynthesis; L-histidine from 5-phospho-alpha-D-ribose 1-diphosphate: step 1/9. Its function is as follows. Required for the first step of histidine biosynthesis. May allow the feedback regulation of ATP phosphoribosyltransferase activity by histidine. The chain is ATP phosphoribosyltransferase regulatory subunit from Agrobacterium fabrum (strain C58 / ATCC 33970) (Agrobacterium tumefaciens (strain C58)).